Reading from the N-terminus, the 149-residue chain is Ribosome-binding factor A (149 aa).

Residues 123–149 are disordered; sequence LAKLREGAAPAGDADPYKTSSKSESEE.

The protein belongs to the RbfA family. Monomer. Binds 30S ribosomal subunits, but not 50S ribosomal subunits or 70S ribosomes.

It is found in the cytoplasm. Functionally, one of several proteins that assist in the late maturation steps of the functional core of the 30S ribosomal subunit. Associates with free 30S ribosomal subunits (but not with 30S subunits that are part of 70S ribosomes or polysomes). Required for efficient processing of 16S rRNA. May interact with the 5'-terminal helix region of 16S rRNA. This Corynebacterium glutamicum (strain ATCC 13032 / DSM 20300 / JCM 1318 / BCRC 11384 / CCUG 27702 / LMG 3730 / NBRC 12168 / NCIMB 10025 / NRRL B-2784 / 534) protein is Ribosome-binding factor A.